Here is a 245-residue protein sequence, read N- to C-terminus: Protein mlo1 (245 aa).

The 35-residue stretch at 4–38 (YKSLKVAELREKLAEKGLSTAGNKAELVSRLTAAT) folds into the SAP domain. The segment at 32–245 (SRLTAATESN…AERFGVAAKN (214 aa)) is disordered. A compositionally biased stretch (low complexity) spans 37-52 (ATESNDENTSNNNATD). Acidic residues predominate over residues 58 to 70 (PPEDDIDWGDMEN). A compositionally biased stretch (polar residues) spans 109-118 (TSQAPETSTG). Basic and acidic residues predominate over residues 119–130 (AEEHQETTEESK). Residue S139 is modified to Phosphoserine. Low complexity predominate over residues 182–196 (SSNNKNHNQSKNPQN).

It belongs to the SAP domain-containing ribonucleoprotein family.

The polypeptide is Protein mlo1 (mlo1) (Schizosaccharomyces pombe (strain 972 / ATCC 24843) (Fission yeast)).